The primary structure comprises 70 residues: Small ribosomal subunit protein bS21 (70 aa).

This sequence belongs to the bacterial ribosomal protein bS21 family.

The chain is Small ribosomal subunit protein bS21 from Helicobacter pylori (strain P12).